A 120-amino-acid chain; its full sequence is Large ribosomal subunit protein uL18 (120 aa).

It belongs to the universal ribosomal protein uL18 family. In terms of assembly, part of the 50S ribosomal subunit; part of the 5S rRNA/L5/L18/L25 subcomplex. Contacts the 5S and 23S rRNAs.

This is one of the proteins that bind and probably mediate the attachment of the 5S RNA into the large ribosomal subunit, where it forms part of the central protuberance. The polypeptide is Large ribosomal subunit protein uL18 (Bradyrhizobium sp. (strain ORS 278)).